The primary structure comprises 341 residues: Anthranilate phosphoribosyltransferase (341 aa).

5-phospho-alpha-D-ribose 1-diphosphate contacts are provided by residues Gly-80, 83–84 (GD), Thr-88, 90–93 (NIST), 108–116 (KHGNRAVSS), and Ser-120. Position 80 (Gly-80) interacts with anthranilate. Ser-92 provides a ligand contact to Mg(2+). Residue Asn-111 participates in anthranilate binding. Arg-166 contributes to the anthranilate binding site. Mg(2+)-binding residues include Asp-225 and Glu-226.

This sequence belongs to the anthranilate phosphoribosyltransferase family. In terms of assembly, homodimer. Mg(2+) is required as a cofactor.

The enzyme catalyses N-(5-phospho-beta-D-ribosyl)anthranilate + diphosphate = 5-phospho-alpha-D-ribose 1-diphosphate + anthranilate. The protein operates within amino-acid biosynthesis; L-tryptophan biosynthesis; L-tryptophan from chorismate: step 2/5. Its function is as follows. Catalyzes the transfer of the phosphoribosyl group of 5-phosphorylribose-1-pyrophosphate (PRPP) to anthranilate to yield N-(5'-phosphoribosyl)-anthranilate (PRA). This is Anthranilate phosphoribosyltransferase from Brevibacillus brevis (strain 47 / JCM 6285 / NBRC 100599).